The primary structure comprises 68 residues: Large ribosomal subunit protein bL31 (68 aa).

Residues Cys17, Cys19, Cys37, and Cys40 each contribute to the Zn(2+) site.

It belongs to the bacterial ribosomal protein bL31 family. Type A subfamily. As to quaternary structure, part of the 50S ribosomal subunit. Zn(2+) serves as cofactor.

Binds the 23S rRNA. The polypeptide is Large ribosomal subunit protein bL31 (Dehalococcoides mccartyi (strain CBDB1)).